The chain runs to 563 residues: Serine/threonine-protein kinase WNK8 (563 aa).

Residues 29–286 form the Protein kinase domain; the sequence is IRYDDVLGRG…ALELSKDPFL (258 aa). Residues 109-112 and Lys-159 each bind ATP; that span reads TELF. The Proton acceptor role is filled by Asp-176. The span at 426–436 shows a compositional bias: polar residues; it reads TSSHHNQNSPR. The interval 426–459 is disordered; that stretch reads TSSHHNQNSPRLTHEDHEAANQQTVNSKDEEAAG. Ser-509 is subject to Phosphoserine.

The protein belongs to the protein kinase superfamily. Ser/Thr protein kinase family. WNK subfamily. Interacts with RGS1 and GB1, but not with GPA1. The association with RGS1 at the plasma membrane is triggered by induction of glucose. Binds to EDM2 in nucleus. Autophosphorylated.

It is found in the nucleus. It catalyses the reaction L-seryl-[protein] + ATP = O-phospho-L-seryl-[protein] + ADP + H(+). The enzyme catalyses L-threonyl-[protein] + ATP = O-phospho-L-threonyl-[protein] + ADP + H(+). Its function is as follows. Regulates flowering time by modulating the photoperiod pathway. Phosphorylates the vacuolar ATPase subunit C (VATC) and RGS1. Regulates EDM2 that, in turn, modulates development processes. This chain is Serine/threonine-protein kinase WNK8 (WNK8), found in Arabidopsis thaliana (Mouse-ear cress).